We begin with the raw amino-acid sequence, 257 residues long: Protein Cmaq_1209 (257 aa).

This sequence belongs to the CinA family.

The chain is Protein Cmaq_1209 from Caldivirga maquilingensis (strain ATCC 700844 / DSM 13496 / JCM 10307 / IC-167).